The primary structure comprises 685 residues: Potassium-transporting ATPase ATP-binding subunit (685 aa).

Transmembrane regions (helical) follow at residues 36–56, 68–88, 218–238, and 255–275; these read MFVVEVGFFVTILLTIFPSIF, LIVTIILFITVLFANFAESVA, IALNTILVSLTLIFLIVLVAL, and IALLVCLIPTTIGGLLSAIGI. Aspartate 306 acts as the 4-aspartylphosphate intermediate in catalysis. ATP is bound by residues aspartate 343, glutamate 347, 375–382, and lysine 394; that span reads FTAQTRMS. Mg(2+)-binding residues include aspartate 517 and aspartate 521. 3 consecutive transmembrane segments (helical) span residues 587–607, 615–635, and 654–674; these read FAIIPAIFTIAIPKMQLMNIM, AILSALIFNAIIIPALIPIAM, and IVFGFGGIIVPFVGIKIIDMI.

The protein belongs to the cation transport ATPase (P-type) (TC 3.A.3) family. Type IA subfamily. In terms of assembly, the system is composed of three essential subunits: KdpA, KdpB and KdpC.

It is found in the cell membrane. It catalyses the reaction K(+)(out) + ATP + H2O = K(+)(in) + ADP + phosphate + H(+). In terms of biological role, part of the high-affinity ATP-driven potassium transport (or Kdp) system, which catalyzes the hydrolysis of ATP coupled with the electrogenic transport of potassium into the cytoplasm. This subunit is responsible for energy coupling to the transport system and for the release of the potassium ions to the cytoplasm. This Clostridium acetobutylicum (strain ATCC 824 / DSM 792 / JCM 1419 / IAM 19013 / LMG 5710 / NBRC 13948 / NRRL B-527 / VKM B-1787 / 2291 / W) protein is Potassium-transporting ATPase ATP-binding subunit.